Consider the following 185-residue polypeptide: Phosphatidylglycerophosphatase GEP4, mitochondrial (185 aa).

The short motif at 45 to 49 (DKDNC) is the Phosphoryl acceptor element.

The protein belongs to the GEP4 family.

It localises to the mitochondrion inner membrane. The catalysed reaction is a 1,2-diacyl-sn-glycero-3-phospho-(1'-sn-glycero-3'-phosphate) + H2O = a 1,2-diacyl-sn-glycero-3-phospho-(1'-sn-glycerol) + phosphate. Its pathway is phospholipid metabolism; phosphatidylglycerol biosynthesis; phosphatidylglycerol from CDP-diacylglycerol: step 2/2. Functionally, phosphatidylglycerophosphatase involved in the biosynthesis of cardiolipin (CL), a unique dimeric phosphoglycerolipid predominantly present in mitochondrial membranes and which has important functions for cellular energy metabolism, mitochondrial dynamics and the initiation of apoptotic pathways. Required for the stability of respiratory chain supercomplexes and for growth at elevated temperature, in presence of ethidium bromide or in absence of prohibitins. This Saccharomyces cerevisiae (strain ATCC 204508 / S288c) (Baker's yeast) protein is Phosphatidylglycerophosphatase GEP4, mitochondrial (GEP4).